Consider the following 467-residue polypeptide: Mitogen-activated protein kinase kinase kinase 8 (467 aa).

A Phosphothreonine modification is found at Thr80. Phosphoserine is present on residues Ser138 and Ser141. ATP is bound by residues 144–152 (VPRGAFGKV) and Lys167. The Protein kinase domain occupies 146–388 (RGAFGKVYLA…AADLLKHEAL (243 aa)). Asp253 serves as the catalytic Proton acceptor. Thr290 carries the phosphothreonine modification. Residues Ser400 and Ser443 each carry the phosphoserine modification.

This sequence belongs to the protein kinase superfamily. STE Ser/Thr protein kinase family. MAP kinase kinase kinase subfamily. In terms of assembly, forms a ternary complex with NFKB1/p105 and TNIP2. Interacts with NFKB1; the interaction increases the stability of MAP3K8 but inhibits its MEK phosphorylation activity, whereas loss of interaction following LPS stimulation leads to its degradation. Interacts with CD40 and TRAF6; the interaction is required for ERK activation. Interacts with KSR2; the interaction inhibits ERK and NF-kappa-B activation. Mg(2+) is required as a cofactor. Post-translationally, autophosphorylated. As to expression, expressed in spleen, thymus, liver and lung.

It localises to the cytoplasm. The catalysed reaction is L-seryl-[protein] + ATP = O-phospho-L-seryl-[protein] + ADP + H(+). It carries out the reaction L-threonyl-[protein] + ATP = O-phospho-L-threonyl-[protein] + ADP + H(+). Required for lipopolysaccharide (LPS)-induced, TLR4-mediated activation of the MAPK/ERK pathway in macrophages, thus being critical for production of the pro-inflammatory cytokine TNF-alpha (TNF) during immune responses. Involved in the regulation of T-helper cell differentiation and IFNG expression in T-cells. Involved in mediating host resistance to bacterial infection through negative regulation of type I interferon (IFN) production. Transduces CD40 and TNFRSF1A signals that activate ERK in B-cells and macrophages, and thus may play a role in the regulation of immunoglobulin production. May also play a role in the transduction of TNF signals that activate JNK and NF-kappa-B in some cell types. In adipocytes, activates MAPK/ERK pathway in an IKBKB-dependent manner in response to IL1B and TNF, but not insulin, leading to induction of lipolysis. Plays a role in the cell cycle. In Rattus norvegicus (Rat), this protein is Mitogen-activated protein kinase kinase kinase 8 (Map3k8).